The chain runs to 145 residues: AN1-type zinc finger protein 2A (145 aa).

AN1-type zinc fingers lie at residues 4–52 (PDLG…QKDV) and 94–142 (KIFT…RPTI). Positions 10, 15, 25, 28, 33, 36, 42, 44, 100, 105, 115, 118, 123, 126, 132, and 134 each coordinate Zn(2+).

The protein resides in the cytoplasm. Its subcellular location is the nucleus. The polypeptide is AN1-type zinc finger protein 2A (ZFAND2A) (Homo sapiens (Human)).